A 121-amino-acid polypeptide reads, in one-letter code: Ribonuclease P protein component (121 aa).

Belongs to the RnpA family. Consists of a catalytic RNA component (M1 or rnpB) and a protein subunit.

It catalyses the reaction Endonucleolytic cleavage of RNA, removing 5'-extranucleotides from tRNA precursor.. Functionally, RNaseP catalyzes the removal of the 5'-leader sequence from pre-tRNA to produce the mature 5'-terminus. It can also cleave other RNA substrates such as 4.5S RNA. The protein component plays an auxiliary but essential role in vivo by binding to the 5'-leader sequence and broadening the substrate specificity of the ribozyme. This Geobacillus thermodenitrificans (strain NG80-2) protein is Ribonuclease P protein component.